The primary structure comprises 508 residues: Steroid 17-alpha-hydroxylase/17,20 lyase (508 aa).

Asn-202 is a binding site for substrate. Cys-442 serves as a coordination point for heme.

It belongs to the cytochrome P450 family. Heme serves as cofactor.

The protein localises to the endoplasmic reticulum membrane. Its subcellular location is the microsome membrane. It catalyses the reaction a C21-steroid + reduced [NADPH--hemoprotein reductase] + O2 = a 17alpha-hydroxy-C21-steroid + oxidized [NADPH--hemoprotein reductase] + H2O + H(+). The enzyme catalyses progesterone + reduced [NADPH--hemoprotein reductase] + O2 = 17alpha-hydroxyprogesterone + oxidized [NADPH--hemoprotein reductase] + H2O + H(+). The catalysed reaction is pregnenolone + reduced [NADPH--hemoprotein reductase] + O2 = 17alpha-hydroxypregnenolone + oxidized [NADPH--hemoprotein reductase] + H2O + H(+). It carries out the reaction 17alpha-hydroxyprogesterone + reduced [NADPH--hemoprotein reductase] + O2 = androst-4-ene-3,17-dione + acetate + oxidized [NADPH--hemoprotein reductase] + H2O + 2 H(+). It catalyses the reaction 17alpha-hydroxyprogesterone + reduced [NADPH--hemoprotein reductase] + O2 = 16alpha,17alpha-dihydroxyprogesterone + oxidized [NADPH--hemoprotein reductase] + H2O + H(+). The enzyme catalyses 16alpha,17alpha-dihydroxyprogesterone + reduced [NADPH--hemoprotein reductase] + O2 = 6beta,16alpha,17alpha-trihydroxyprogesterone + oxidized [NADPH--hemoprotein reductase] + H2O + H(+). The catalysed reaction is 17alpha-hydroxypregnenolone + reduced [NADPH--hemoprotein reductase] + O2 = 3beta-hydroxyandrost-5-en-17-one + acetate + oxidized [NADPH--hemoprotein reductase] + H2O + 2 H(+). It carries out the reaction 16alpha,17alpha-dihydroxypregnenolone + reduced [NADPH--hemoprotein reductase] + O2 = 3beta,16alpha-dihydroxy-androst-5-en-17-one + acetate + oxidized [NADPH--hemoprotein reductase] + H2O + 2 H(+). It catalyses the reaction 3beta-hydroxyandrost-5-en-17-one + reduced [NADPH--hemoprotein reductase] + O2 = 3beta,16alpha-dihydroxy-androst-5-en-17-one + oxidized [NADPH--hemoprotein reductase] + H2O + H(+). The enzyme catalyses androst-4-ene-3,17-dione + reduced [NADPH--hemoprotein reductase] + O2 = 16alpha-hydroxyandrost-4-ene-3,17-dione + oxidized [NADPH--hemoprotein reductase] + H2O + H(+). The protein operates within steroid hormone biosynthesis. It participates in steroid biosynthesis; glucocorticoid biosynthesis. Its activity is regulated as follows. Regulated predominantly by intracellular cAMP levels. The 17,20-lyase activity is stimulated by cytochrome b5, which acts as an allosteric effector increasing the Vmax of the lyase activity. In terms of biological role, a cytochrome P450 monooxygenase involved in corticoid and androgen biosynthesis. Catalyzes 17-alpha hydroxylation of C21 steroids, which is common for both pathways. A second oxidative step, required only for androgen synthesis, involves an acyl-carbon cleavage. The 17-alpha hydroxy intermediates, as part of adrenal glucocorticoids biosynthesis pathway, are precursors of cortisol. Hydroxylates steroid hormones, pregnenolone and progesterone to form 17-alpha hydroxy metabolites, followed by the cleavage of the C17-C20 bond to form C19 steroids, dehydroepiandrosterone (DHEA) and androstenedione. Has 16-alpha hydroxylase activity. Catalyzes 16-alpha hydroxylation of 17-alpha hydroxy pregnenolone, followed by the cleavage of the C17-C20 bond to form 16-alpha-hydroxy DHEA. Also 16-alpha hydroxylates androgens, relevant for estriol synthesis. Mechanistically, uses molecular oxygen inserting one oxygen atom into a substrate, and reducing the second into a water molecule, with two electrons provided by NADPH via cytochrome P450 reductase (CPR; NADPH-ferrihemoprotein reductase). The polypeptide is Steroid 17-alpha-hydroxylase/17,20 lyase (CYP17A1) (Pan troglodytes (Chimpanzee)).